Reading from the N-terminus, the 185-residue chain is CASP-like protein 5A1 (185 aa).

Residues 1–48 (MNVSHPAVHPVGVPPALGGQAVPPRMRMRVRMEYLVFQGMPLPGSLGG) are Cytoplasmic-facing. A helical membrane pass occupies residues 49-69 (LMLRLGQFCSALIAFSVMVSI). At 70-76 (RDFSVTA) the chain is on the extracellular side. The helical transmembrane segment at 77 to 97 (FCYLLAATVLQCLWSLALAVI) threads the bilayer. The Cytoplasmic portion of the chain corresponds to 98–121 (DVYALLVKRSLRNPLLVSIFVVGD). Residues 122-142 (GVTATLTFAAACASAGVVVLI) traverse the membrane as a helical segment. Topologically, residues 143-160 (GNDISMCKSNPCANYEAA) are extracellular. Residues 161-181 (IIMAFLSWFMVSISFVLTFWM) traverse the membrane as a helical segment. Residues 182 to 185 (LATL) lie on the Cytoplasmic side of the membrane.

It belongs to the Casparian strip membrane proteins (CASP) family. In terms of assembly, homodimer and heterodimers.

It is found in the cell membrane. This Pinus contorta (Shore pine) protein is CASP-like protein 5A1.